The primary structure comprises 369 residues: Phospho-N-acetylmuramoyl-pentapeptide-transferase (369 aa).

10 consecutive transmembrane segments (helical) span residues 2 to 22 (IAIL…TPFF), 54 to 74 (GLVI…FLGL), 80 to 100 (GLLV…DDIL), 113 to 133 (FYKV…TFLV), 158 to 178 (ALFS…LLWI), 195 to 215 (LDGL…VIGF), 241 to 261 (PLDM…FLWW), 268 to 288 (IMMG…LSIL), 293 to 313 (LLFL…ILQI), and 347 to 367 (FWII…ADWL).

It belongs to the glycosyltransferase 4 family. MraY subfamily. It depends on Mg(2+) as a cofactor.

Its subcellular location is the cell membrane. The catalysed reaction is UDP-N-acetyl-alpha-D-muramoyl-L-alanyl-gamma-D-glutamyl-meso-2,6-diaminopimeloyl-D-alanyl-D-alanine + di-trans,octa-cis-undecaprenyl phosphate = di-trans,octa-cis-undecaprenyl diphospho-N-acetyl-alpha-D-muramoyl-L-alanyl-D-glutamyl-meso-2,6-diaminopimeloyl-D-alanyl-D-alanine + UMP. It functions in the pathway cell wall biogenesis; peptidoglycan biosynthesis. Its function is as follows. Catalyzes the initial step of the lipid cycle reactions in the biosynthesis of the cell wall peptidoglycan: transfers peptidoglycan precursor phospho-MurNAc-pentapeptide from UDP-MurNAc-pentapeptide onto the lipid carrier undecaprenyl phosphate, yielding undecaprenyl-pyrophosphoryl-MurNAc-pentapeptide, known as lipid I. This chain is Phospho-N-acetylmuramoyl-pentapeptide-transferase, found in Tropheryma whipplei (strain TW08/27) (Whipple's bacillus).